The following is a 480-amino-acid chain: Glutamate--tRNA ligase 2 (480 aa).

The 'HIGH' region motif lies at 15–25; that stretch reads PSPTGYLHVGG. The 'KMSKS' region motif lies at 248–252; the sequence is RLSKR. ATP is bound at residue Lys-251.

It belongs to the class-I aminoacyl-tRNA synthetase family. Glutamate--tRNA ligase type 1 subfamily. As to quaternary structure, monomer.

The protein localises to the cytoplasm. It carries out the reaction tRNA(Glu) + L-glutamate + ATP = L-glutamyl-tRNA(Glu) + AMP + diphosphate. Its function is as follows. Catalyzes the attachment of glutamate to tRNA(Glu) in a two-step reaction: glutamate is first activated by ATP to form Glu-AMP and then transferred to the acceptor end of tRNA(Glu). The chain is Glutamate--tRNA ligase 2 from Koribacter versatilis (strain Ellin345).